Reading from the N-terminus, the 380-residue chain is E3 ubiquitin-protein ligase RNF13 (380 aa).

The N-terminal stretch at 1–34 (MLLSIGMLMLSATQVYTILTVQLFAFLNLLPVEA) is a signal peptide. Residues 35-182 (DILAYNFENA…VPEFSLPLEY (148 aa)) lie on the Lumenal side of the membrane. The PA domain maps to 65–160 (KGFLINSKPE…GESSANSLKD (96 aa)). Asparagine 88 carries N-linked (GlcNAc...) asparagine glycosylation. Residues 183–203 (YLIPFLIIVGICLILIVIFMI) traverse the membrane as a helical segment. The Cytoplasmic portion of the chain corresponds to 204-380 (TKFVQDRHRA…ERDYNIANTV (177 aa)). The RING-type; atypical zinc-finger motif lies at 240–282 (CAICLDEYEDGDKLRILPCSHAYHCKCVDPWLTKTKKTCPVCK). Residues 285-380 (VVPSQGDSDS…ERDYNIANTV (96 aa)) form a disordered region. Composition is skewed to acidic residues over residues 292–304 (SDSDTDSSQEENE) and 339–356 (SDYEEDDNDTDSSDAENE).

In terms of assembly, interacts with ERN1. In terms of processing, autoubiquitinated.

The protein localises to the endoplasmic reticulum membrane. The protein resides in the late endosome membrane. It localises to the lysosome membrane. Its subcellular location is the nucleus inner membrane. It carries out the reaction S-ubiquitinyl-[E2 ubiquitin-conjugating enzyme]-L-cysteine + [acceptor protein]-L-lysine = [E2 ubiquitin-conjugating enzyme]-L-cysteine + N(6)-ubiquitinyl-[acceptor protein]-L-lysine.. Its pathway is protein modification; protein ubiquitination. Its function is as follows. E3 ubiquitin-protein ligase that regulates cell proliferation. Involved in apoptosis regulation. Mediates ER stress-induced activation of JNK signaling pathway and apoptosis by promoting ERN1 activation and splicing of XBP1 mRNA. Also involved in protein trafficking and localization. The protein is E3 ubiquitin-protein ligase RNF13 (RNF13) of Bos taurus (Bovine).